The following is a 205-amino-acid chain: Dephospho-CoA kinase (205 aa).

Residues 13-205 (RIGLTGGIAS…KWINTIREIL (193 aa)) enclose the DPCK domain. 21 to 26 (ASGKST) contacts ATP.

This sequence belongs to the CoaE family.

It localises to the cytoplasm. It catalyses the reaction 3'-dephospho-CoA + ATP = ADP + CoA + H(+). It functions in the pathway cofactor biosynthesis; coenzyme A biosynthesis; CoA from (R)-pantothenate: step 5/5. Catalyzes the phosphorylation of the 3'-hydroxyl group of dephosphocoenzyme A to form coenzyme A. The polypeptide is Dephospho-CoA kinase (Prochlorococcus marinus (strain MIT 9312)).